The chain runs to 212 residues: Ferric nitrobindin-like protein (212 aa).

Over residues 1–11 the composition is skewed to basic and acidic residues; that stretch reads MTSSDQPERGS. The disordered stretch occupies residues 1–36; it reads MTSSDQPERGSGDAAVQAAAERAEQTRGRNVPQFDD. A GXWXGXG motif is present at residues 64-70; sequence GVWRGDG.

It belongs to the nitrobindin family.

In Saccharopolyspora erythraea (strain ATCC 11635 / DSM 40517 / JCM 4748 / NBRC 13426 / NCIMB 8594 / NRRL 2338), this protein is Ferric nitrobindin-like protein.